Reading from the N-terminus, the 82-residue chain is UPF0335 protein pRhico085 (82 aa).

It belongs to the UPF0335 family.

The sequence is that of UPF0335 protein pRhico085 from Azospirillum brasilense.